A 546-amino-acid polypeptide reads, in one-letter code: Probable ganciclovir kinase (546 aa).

The span at 1-11 (MEQLKTPQNQK) shows a compositional bias: polar residues. Residues 1 to 29 (MEQLKTPQNQKTRPRNMLPKKKGKELKKR) are disordered. A compositionally biased stretch (basic residues) spans 12 to 29 (TRPRNMLPKKKGKELKKR). Residues 185–193 (LGSGSYGMV) and K202 each bind ATP. The active-site Proton acceptor is D297.

It belongs to the protein kinase superfamily. Tyr protein kinase family. HCMV ganciclovir subfamily.

Functionally, phosphorylates the antiviral nucleoside analog ganciclovir. The chain is Probable ganciclovir kinase (U69) from Human herpesvirus 7 (strain JI) (HHV-7).